The following is a 31-amino-acid chain: Glucagon-3 (31 aa).

Belongs to the glucagon family.

It is found in the secreted. Its function is as follows. Glucagon plays a key role in glucose metabolism and homeostasis. Regulates blood glucose by increasing gluconeogenesis and decreasing glycolysis. The chain is Glucagon-3 from Huso dauricus (Kaluga sturgeon).